We begin with the raw amino-acid sequence, 337 residues long: SH3 and cysteine-rich domain-containing protein 3 (337 aa).

Basic and acidic residues predominate over residues 1 to 11; the sequence is MFKKKAKEEKP. 2 disordered regions span residues 1 to 61 and 162 to 215; these read MFKK…KPHK and NKER…NKKA. A compositionally biased stretch (acidic residues) spans 35–48; it reads ESEEEEEEEEEEPP. Residues 59 to 110 form a Phorbol-ester/DAG-type zinc finger; the sequence is PHKFKDHYLKKPKFCDVCARMIVLNNKFGLRCKNCKTNIHHHCQSYVEFQKC. Composition is skewed to basic and acidic residues over residues 167-176 and 184-212; these read KGQDDKKNPM and LPPK…DAKN. SH3 domains are found at residues 220–279 and 280–337; these read MQSH…RVRA and AERV…LQEI.

Component of a calcium channel complex with CACNA1S.

Its subcellular location is the cytoplasm. It localises to the cell membrane. The protein localises to the sarcolemma. It is found in the T-tubule. Required for normal excitation-contraction coupling in skeletal muscle and for normal muscle contraction in response to membrane depolarization. Required for normal Ca(2+) release from the sarcplasmic reticulum, which ultimately leads to muscle contraction. Probably functions via its effects on muscle calcium channels. Increases CACNA1S channel activity, in addition to its role in enhancing the expression of CACNA1S at the cell membrane. Has a redundant role in promoting the expression of the calcium channel CACNA1S at the cell membrane. The sequence is that of SH3 and cysteine-rich domain-containing protein 3 (stac3) from Xenopus tropicalis (Western clawed frog).